A 2207-amino-acid polypeptide reads, in one-letter code: Desmoplakin-B (2207 aa).

Coiled-coil stretches lie at residues 506-916 (MEEL…EAGK), 952-1000 (AKHA…EQGR), and 1029-1063 (TERL…LLKN). Basic and acidic residues predominate over residues 905–924 (KQRQVAEEEAGKRRRTESQL). The interval 905-933 (KQRQVAEEEAGKRRRTESQLEKSSQAMRE) is disordered. 9 Plectin repeats span residues 1369–1406 (LLEA…DKKQ), 1407–1445 (LLIA…TLRL), 1446–1483 (LQAQ…YQAL), 1571–1609 (YLRG…TLEL), 1610–1647 (LEAQ…KDKL), 1685–1723 (LLEA…NQIL), 1783–1811 (IVDP…FLEL), 1992–2029 (LLEA…MANR), and 2068–2106 (FLEF…AQRL). Positions 2155 to 2164 (ISSPYNLSNP) are enriched in polar residues. Positions 2155-2207 (ISSPYNLSNPGSASGSRSGSRRGSVDYSLSPSSSSRYSSFSYSRTSFSSRSLS) are disordered. Low complexity predominate over residues 2165–2207 (GSASGSRSGSRRGSVDYSLSPSSSSRYSSFSYSRTSFSSRSLS).

The protein belongs to the plakin or cytolinker family.

The protein localises to the cell junction. It localises to the desmosome. The protein resides in the cell membrane. In terms of biological role, involved in the organization of desmosome cell-cell junctions. Of particular importance in cell adhesion in the skin and during cardiac development. May also play a role in the regulation of Wnt, TGF-beta and Hippo signaling pathways. This Danio rerio (Zebrafish) protein is Desmoplakin-B.